The chain runs to 335 residues: Ketol-acid reductoisomerase (NADP(+)) (335 aa).

A KARI N-terminal Rossmann domain is found at 2-182 (VEMFYDKDAD…GCTRAGVIET (181 aa)). NADP(+) contacts are provided by residues 25 to 28 (YGSQ), R48, S51, and 83 to 86 (DEIQ). H108 is an active-site residue. An NADP(+)-binding site is contributed by G134. In terms of domain architecture, KARI C-terminal knotted spans 183–328 (TFREETETDL…KKLRAMMPWL (146 aa)). Residues D191, E195, E227, and E231 each contribute to the Mg(2+) site. S252 is a binding site for substrate.

Belongs to the ketol-acid reductoisomerase family. Mg(2+) is required as a cofactor.

The enzyme catalyses (2R)-2,3-dihydroxy-3-methylbutanoate + NADP(+) = (2S)-2-acetolactate + NADPH + H(+). It catalyses the reaction (2R,3R)-2,3-dihydroxy-3-methylpentanoate + NADP(+) = (S)-2-ethyl-2-hydroxy-3-oxobutanoate + NADPH + H(+). The protein operates within amino-acid biosynthesis; L-isoleucine biosynthesis; L-isoleucine from 2-oxobutanoate: step 2/4. Its pathway is amino-acid biosynthesis; L-valine biosynthesis; L-valine from pyruvate: step 2/4. Functionally, involved in the biosynthesis of branched-chain amino acids (BCAA). Catalyzes an alkyl-migration followed by a ketol-acid reduction of (S)-2-acetolactate (S2AL) to yield (R)-2,3-dihydroxy-isovalerate. In the isomerase reaction, S2AL is rearranged via a Mg-dependent methyl migration to produce 3-hydroxy-3-methyl-2-ketobutyrate (HMKB). In the reductase reaction, this 2-ketoacid undergoes a metal-dependent reduction by NADPH to yield (R)-2,3-dihydroxy-isovalerate. This chain is Ketol-acid reductoisomerase (NADP(+)), found in Methanococcoides burtonii (strain DSM 6242 / NBRC 107633 / OCM 468 / ACE-M).